A 172-amino-acid chain; its full sequence is Small ribosomal subunit protein uS5 (172 aa).

Residues 17–80 (MREKMIAVNR…EECRRNLVKV (64 aa)) form the S5 DRBM domain.

It belongs to the universal ribosomal protein uS5 family. As to quaternary structure, part of the 30S ribosomal subunit. Contacts proteins S4 and S8.

Functionally, with S4 and S12 plays an important role in translational accuracy. In terms of biological role, located at the back of the 30S subunit body where it stabilizes the conformation of the head with respect to the body. The chain is Small ribosomal subunit protein uS5 from Paracidovorax citrulli (strain AAC00-1) (Acidovorax citrulli).